The following is a 150-amino-acid chain: SsrA-binding protein (150 aa).

The protein belongs to the SmpB family.

It is found in the cytoplasm. Functionally, required for rescue of stalled ribosomes mediated by trans-translation. Binds to transfer-messenger RNA (tmRNA), required for stable association of tmRNA with ribosomes. tmRNA and SmpB together mimic tRNA shape, replacing the anticodon stem-loop with SmpB. tmRNA is encoded by the ssrA gene; the 2 termini fold to resemble tRNA(Ala) and it encodes a 'tag peptide', a short internal open reading frame. During trans-translation Ala-aminoacylated tmRNA acts like a tRNA, entering the A-site of stalled ribosomes, displacing the stalled mRNA. The ribosome then switches to translate the ORF on the tmRNA; the nascent peptide is terminated with the 'tag peptide' encoded by the tmRNA and targeted for degradation. The ribosome is freed to recommence translation, which seems to be the essential function of trans-translation. The chain is SsrA-binding protein from Campylobacter curvus (strain 525.92).